The following is a 246-amino-acid chain: Aspartate/glutamate leucyltransferase (246 aa).

Belongs to the R-transferase family. Bpt subfamily.

It localises to the cytoplasm. It catalyses the reaction N-terminal L-glutamyl-[protein] + L-leucyl-tRNA(Leu) = N-terminal L-leucyl-L-glutamyl-[protein] + tRNA(Leu) + H(+). The catalysed reaction is N-terminal L-aspartyl-[protein] + L-leucyl-tRNA(Leu) = N-terminal L-leucyl-L-aspartyl-[protein] + tRNA(Leu) + H(+). Functionally, functions in the N-end rule pathway of protein degradation where it conjugates Leu from its aminoacyl-tRNA to the N-termini of proteins containing an N-terminal aspartate or glutamate. The protein is Aspartate/glutamate leucyltransferase of Rhodospirillum rubrum (strain ATCC 11170 / ATH 1.1.1 / DSM 467 / LMG 4362 / NCIMB 8255 / S1).